Here is a 551-residue protein sequence, read N- to C-terminus: Calcium-dependent protein kinase 19 (551 aa).

Glycine 2 carries the N-myristoyl glycine lipid modification. Positions 12–46 (VKKPTPDISGEQNTEVKSREITPKEQPRQRQPAPR) are disordered. The span at 25 to 39 (TEVKSREITPKEQPR) shows a compositional bias: basic and acidic residues. In terms of domain architecture, Protein kinase spans 98–357 (YSLGRELGRG…AAQVLEHPWI (260 aa)). Residues 104–112 (LGRGQFGIT) and lysine 127 contribute to the ATP site. The active-site Proton acceptor is aspartate 222. Serine 263 bears the Phosphoserine mark. Residues 363–393 (ASDKPIDSAVLSRMKQLRAMNKLKKLAFKFI) form an autoinhibitory domain region. 4 EF-hand domains span residues 400–435 (EELKGLKTMFANMDTDKSGTITYDELKSGLEKLGSR), 436–471 (LTETEVKQLLEDADVDGNGTIDYIEFISATMNRFRV), 472–507 (EREDNLFKAFQHFDKDNSGFISRQELETAMKEYNMG), and 512–542 (IKEIISEVDADNDGSINYQEFCNMMKSCSQS). Ca(2+) contacts are provided by aspartate 413, aspartate 415, serine 417, threonine 419, glutamate 424, aspartate 449, aspartate 451, asparagine 453, threonine 455, glutamate 460, aspartate 485, aspartate 487, serine 489, glutamate 496, aspartate 520, aspartate 522, aspartate 524, serine 526, and glutamate 531.

It belongs to the protein kinase superfamily. Ser/Thr protein kinase family. CDPK subfamily.

The protein resides in the membrane. The catalysed reaction is L-seryl-[protein] + ATP = O-phospho-L-seryl-[protein] + ADP + H(+). It carries out the reaction L-threonyl-[protein] + ATP = O-phospho-L-threonyl-[protein] + ADP + H(+). Activated by calcium. Autophosphorylation may play an important role in the regulation of the kinase activity. May play a role in signal transduction pathways that involve calcium as a second messenger. This Arabidopsis thaliana (Mouse-ear cress) protein is Calcium-dependent protein kinase 19 (CPK19).